Here is a 417-residue protein sequence, read N- to C-terminus: D-glycerate 2-kinase (417 aa).

The protein belongs to the glycerate kinase type-1 family. As to quaternary structure, homodimer. Mg(2+) is required as a cofactor.

It catalyses the reaction (R)-glycerate + ATP = (2R)-2-phosphoglycerate + ADP + H(+). Functionally, involved in the degradation of serine via 3-hydroxypyruvate. Catalyzes the ATP-dependent phosphorylation of D-glycerate to 2-phosphoglycerate. This Thermotoga maritima (strain ATCC 43589 / DSM 3109 / JCM 10099 / NBRC 100826 / MSB8) protein is D-glycerate 2-kinase.